Consider the following 78-residue polypeptide: Acyl carrier protein (78 aa).

In terms of domain architecture, Carrier spans 2–77; that stretch reads SNIEDRVRKI…AAIDYVNSAS (76 aa). Serine 37 carries the O-(pantetheine 4'-phosphoryl)serine modification.

It belongs to the acyl carrier protein (ACP) family. Post-translationally, 4'-phosphopantetheine is transferred from CoA to a specific serine of apo-ACP by AcpS. This modification is essential for activity because fatty acids are bound in thioester linkage to the sulfhydryl of the prosthetic group.

The protein resides in the cytoplasm. The protein operates within lipid metabolism; fatty acid biosynthesis. Its function is as follows. Carrier of the growing fatty acid chain in fatty acid biosynthesis. The sequence is that of Acyl carrier protein from Photobacterium profundum (strain SS9).